A 166-amino-acid polypeptide reads, in one-letter code: MAEVKPVTAVFPGTFDPFTRGHFSLVMRGIKTFHKVIVAVAGSTSKNTKFSLEERVDMAKRIFEHHPQVEVDSFDGLLVHYVEQSPANVIMRGLRAVSDFEYEFQMALMNRRLDNDIQTVFLMTDYKWMYLSSSIIKDVAVNGGDIKGLVPRQIYDEVIERLVPGK.

Thr-14 serves as a coordination point for substrate. ATP is bound by residues 14 to 15 (TF) and His-22. Substrate contacts are provided by Lys-46, Leu-78, and Arg-92. ATP contacts are provided by residues 93–95 (GLR), Glu-103, and 128–134 (WMYLSSS).

It belongs to the bacterial CoaD family. As to quaternary structure, homohexamer. Mg(2+) serves as cofactor.

It localises to the cytoplasm. It carries out the reaction (R)-4'-phosphopantetheine + ATP + H(+) = 3'-dephospho-CoA + diphosphate. It participates in cofactor biosynthesis; coenzyme A biosynthesis; CoA from (R)-pantothenate: step 4/5. In terms of biological role, reversibly transfers an adenylyl group from ATP to 4'-phosphopantetheine, yielding dephospho-CoA (dPCoA) and pyrophosphate. The polypeptide is Phosphopantetheine adenylyltransferase (Maridesulfovibrio salexigens (strain ATCC 14822 / DSM 2638 / NCIMB 8403 / VKM B-1763) (Desulfovibrio salexigens)).